The sequence spans 338 residues: Citramalyl-CoA lyase, mitochondrial (338 aa).

A mitochondrion-targeting transit peptide spans 1–20 (MALCVLQNAVRGAAALPRLK). Substrate-binding residues include Tyr48, Lys55, and Lys59. N6-acetyllysine is present on residues Lys55, Lys59, and Lys64. Residues Lys80 and Lys90 each carry the N6-acetyllysine; alternate modification. An N6-succinyllysine; alternate mark is found at Lys80 and Lys90. Arg105 is a substrate binding site. Positions 169 and 204 each coordinate Mg(2+). 270–271 (IH) is a binding site for substrate. An N6-succinyllysine modification is found at Lys307. Asp318 is a catalytic residue.

It belongs to the HpcH/HpaI aldolase family. Citrate lyase beta subunit-like subfamily. As to quaternary structure, homotrimer. Mg(2+) serves as cofactor.

It is found in the mitochondrion. The catalysed reaction is glyoxylate + acetyl-CoA + H2O = (S)-malate + CoA + H(+). It carries out the reaction propanoyl-CoA + glyoxylate + H2O = 3-methylmalate + CoA + H(+). It catalyses the reaction (3S)-citramalyl-CoA = pyruvate + acetyl-CoA. The enzyme catalyses (S)-malyl-CoA + H2O = (S)-malate + CoA + H(+). Functionally, mitochondrial citramalyl-CoA lyase indirectly involved in the vitamin B12 metabolism. Converts citramalyl-CoA into acetyl-CoA and pyruvate in the C5-dicarboxylate catabolism pathway. The C5-dicarboxylate catabolism pathway is required to detoxify itaconate, a vitamin B12-poisoning metabolite. Also acts as a malate synthase in vitro, converting glyoxylate and acetyl-CoA to malate. Also displays malyl-CoA thioesterase activity. Also acts as a beta-methylmalate synthase in vitro, by mediating conversion of glyoxylate and propionyl-CoA to beta-methylmalate. Also has very weak citramalate synthase activity in vitro. The protein is Citramalyl-CoA lyase, mitochondrial (Clybl) of Rattus norvegicus (Rat).